The primary structure comprises 471 residues: V-type ATP synthase beta chain (471 aa).

It belongs to the ATPase alpha/beta chains family.

Functionally, produces ATP from ADP in the presence of a proton gradient across the membrane. The V-type beta chain is a regulatory subunit. This Deinococcus radiodurans (strain ATCC 13939 / DSM 20539 / JCM 16871 / CCUG 27074 / LMG 4051 / NBRC 15346 / NCIMB 9279 / VKM B-1422 / R1) protein is V-type ATP synthase beta chain (atpB).